The primary structure comprises 686 residues: Amphiphysin (686 aa).

Coiled coils occupy residues 10–83 (AKNV…SLHE) and 144–191 (DYDS…QEEL). Residues 24-240 (VLQKLGKADE…MTKLGDQHAD (217 aa)) enclose the BAR domain. Disordered stretches follow at residues 244–314 (SIQG…PTKE), 421–441 (AETE…ATAA), and 483–597 (VEEA…AGAV). A Phosphoserine modification is found at Ser-252. Phosphothreonine is present on Thr-260. A compositionally biased stretch (pro residues) spans 261-274 (PSPPEEPSPLPSPT). Phosphoserine occurs at positions 262, 268, 272, and 276. At Thr-280 the chain carries Phosphothreonine. Residues 424–441 (EQALPTEPQAEEPPATAA) show a composition bias toward low complexity. At Ser-500 the chain carries Phosphoserine. Positions 541–562 (SNHEGEGEHQETATGTEPREAA) are enriched in basic and acidic residues. The SH3 domain maps to 613–686 (GFLYKVETLH…FPENFTRRLE (74 aa)). Ser-629 carries the post-translational modification Phosphoserine.

As to quaternary structure, heterodimer with BIN1. Binds SH3GLB1. Interacts with REPS1 and SGIP1. Binds AP2A2. Interacts with AP2B1. Interacts with DNM1 and SYNJ1.

It is found in the cytoplasmic vesicle. The protein localises to the secretory vesicle. Its subcellular location is the synaptic vesicle membrane. The protein resides in the cytoplasm. It localises to the cytoskeleton. May participate in mechanisms of regulated exocytosis in synapses and certain endocrine cell types. May control the properties of the membrane associated cytoskeleton. The polypeptide is Amphiphysin (Amph) (Mus musculus (Mouse)).